Consider the following 459-residue polypeptide: MMPLAVLHVKRLQPELITPAKPTPQETKFLSDIDDQEFLRFQVPIIMCYKDNPSLNKNRNPVKVIREALSRALVYYYPLAGRLREGPNRKLVVDCNGEGILFIEASADVTLEQLGDKILPPCPLLEEFLFNFPGSDGIIGCPLVLVQVTCLTCGGFILALRLNHTMCDAAGLLLFLTAIAEMARGAHAPSILPVWERELLFARDPPRITCAHHEYEDVIGHSDGSYASSNQSNMVQRSFYFGAKEMRVLRKQIPPHLISTCSTFDLITACLWKCRTLALNINPKEAVRVSCIVNARGKHNNVRLPLGYYGNAFAFPAAISKAEPLCKNPLGYALELVKKAKATMNEEYLRSVADLLVLRGRPQYSSTGSYLIVSDNTRAGFGDVNFGWGQPVFAGPVKALDLISFYVQHKNNAEDGILVPMCLPSSAMERFQQELERITQEPKEDICNNLRSTRIMSMM.

Residues H164 and N385 each act as proton acceptor in the active site.

It belongs to the plant acyltransferase family. As to expression, highly expressed in the cortex and skin of ripe fruit.

It carries out the reaction butan-1-ol + acetyl-CoA = butyl acetate + CoA. The enzyme catalyses butan-1-ol + butanoyl-CoA = butyl butanoate + CoA. It catalyses the reaction butan-1-ol + hexanoyl-CoA = butyl hexanoate + CoA. The catalysed reaction is hexan-1-ol + butanoyl-CoA = hexyl butanoate + CoA. It carries out the reaction hexan-1-ol + acetyl-CoA = hexyl acetate + CoA. The enzyme catalyses 2-methylbutan-1-ol + butanoyl-CoA = 2-methylbutyl butanoate + CoA. It catalyses the reaction ethanol + butanoyl-CoA = ethyl butanoate + CoA. The catalysed reaction is hexanoyl-CoA + ethanol = ethyl hexanoate + CoA. In terms of biological role, involved in the biosynthesis of volatile esters which confer ripe apple fruit flavor. Alcohol acyl transferase that can use a wide range of alcohols as substrate, including 2-methylbutanol, hexanol and ethanol, to produce esters such as butyl butanoate, butyl hexanoate, hexyl butanoate, ethyl butanoate and ethyl hexanoate and, to some extent, 2-methylbutyl acetate (2MBA), butyl acetate, hexyl acetate and 2-methylbutyl butanoate (2MBB). This chain is Alcohol acyl transferase 1 allele GSa, found in Malus domestica (Apple).